Consider the following 878-residue polypeptide: Phosphoenolpyruvate carboxylase (878 aa).

Catalysis depends on residues H137 and K545.

The protein belongs to the PEPCase type 1 family. It depends on Mg(2+) as a cofactor.

It carries out the reaction oxaloacetate + phosphate = phosphoenolpyruvate + hydrogencarbonate. Functionally, forms oxaloacetate, a four-carbon dicarboxylic acid source for the tricarboxylic acid cycle. The protein is Phosphoenolpyruvate carboxylase of Serratia proteamaculans (strain 568).